Reading from the N-terminus, the 477-residue chain is UDP-N-acetylmuramate--L-alanine ligase (477 aa).

Position 125–131 (125–131 (GTHGKTT)) interacts with ATP.

It belongs to the MurCDEF family.

The protein resides in the cytoplasm. It catalyses the reaction UDP-N-acetyl-alpha-D-muramate + L-alanine + ATP = UDP-N-acetyl-alpha-D-muramoyl-L-alanine + ADP + phosphate + H(+). It functions in the pathway cell wall biogenesis; peptidoglycan biosynthesis. Its function is as follows. Cell wall formation. This Acidothermus cellulolyticus (strain ATCC 43068 / DSM 8971 / 11B) protein is UDP-N-acetylmuramate--L-alanine ligase.